The following is a 340-amino-acid chain: Ketol-acid reductoisomerase (NADP(+)) (340 aa).

The KARI N-terminal Rossmann domain occupies V2–T181. NADP(+)-binding positions include Y25–Q28, R48, S52, and D82–Q85. H107 is an active-site residue. An NADP(+)-binding site is contributed by G133. The 146-residue stretch at S182–I327 folds into the KARI C-terminal knotted domain. Positions 190, 194, 226, and 230 each coordinate Mg(2+). S251 serves as a coordination point for substrate.

Belongs to the ketol-acid reductoisomerase family. It depends on Mg(2+) as a cofactor.

The catalysed reaction is (2R)-2,3-dihydroxy-3-methylbutanoate + NADP(+) = (2S)-2-acetolactate + NADPH + H(+). It carries out the reaction (2R,3R)-2,3-dihydroxy-3-methylpentanoate + NADP(+) = (S)-2-ethyl-2-hydroxy-3-oxobutanoate + NADPH + H(+). It functions in the pathway amino-acid biosynthesis; L-isoleucine biosynthesis; L-isoleucine from 2-oxobutanoate: step 2/4. It participates in amino-acid biosynthesis; L-valine biosynthesis; L-valine from pyruvate: step 2/4. Functionally, involved in the biosynthesis of branched-chain amino acids (BCAA). Catalyzes an alkyl-migration followed by a ketol-acid reduction of (S)-2-acetolactate (S2AL) to yield (R)-2,3-dihydroxy-isovalerate. In the isomerase reaction, S2AL is rearranged via a Mg-dependent methyl migration to produce 3-hydroxy-3-methyl-2-ketobutyrate (HMKB). In the reductase reaction, this 2-ketoacid undergoes a metal-dependent reduction by NADPH to yield (R)-2,3-dihydroxy-isovalerate. This Brevibacillus brevis (strain 47 / JCM 6285 / NBRC 100599) protein is Ketol-acid reductoisomerase (NADP(+)).